The sequence spans 96 residues: Transcription and mRNA export factor SUS1 (96 aa).

Lys68 is covalently cross-linked (Glycyl lysine isopeptide (Lys-Gly) (interchain with G-Cter in ubiquitin)).

It belongs to the ENY2 family. Component of the nuclear pore complex (NPC)-associated TREX-2 complex (transcription and export complex 2), composed of at least SUS1, SAC3, THP1, SEM1, and CDC31. TREX-2 contains 2 SUS1 chains. The TREX-2 complex interacts with the nucleoporin NUP1. Component of the 1.8 MDa SAGA transcription coactivator-HAT complex. SAGA is built of 5 distinct domains with specialized functions. Within the SAGA complex, SUS1, SGF11, SGF73 and UBP8 form an additional subcomplex of SAGA called the DUB module (deubiquitination module). Interacts directly with THP1, SAC3, SGF11, and with the RNA polymerase II.

Its subcellular location is the nucleus. The protein resides in the nucleoplasm. It is found in the cytoplasm. It localises to the P-body. Its function is as follows. Involved in mRNA export coupled transcription activation by association with both the TREX-2 and the SAGA complexes. At the promoters, SAGA is required for recruitment of the basal transcription machinery. It influences RNA polymerase II transcriptional activity through different activities such as TBP interaction and promoter selectivity, interaction with transcription activators, and chromatin modification through histone acetylation and deubiquitination. Within the SAGA complex, participates in a subcomplex required for deubiquitination of H2B and for the maintenance of steady-state H3 methylation levels. The TREX-2 complex functions in docking export-competent ribonucleoprotein particles (mRNPs) to the nuclear entrance of the nuclear pore complex (nuclear basket). TREX-2 participates in mRNA export and accurate chromatin positioning in the nucleus by tethering genes to the nuclear periphery. May also be involved in cytoplasmic mRNA decay by interaction with components of P-bodies. The chain is Transcription and mRNA export factor SUS1 from Saccharomyces cerevisiae (strain RM11-1a) (Baker's yeast).